Here is a 23-residue protein sequence, read N- to C-terminus: Kunitz-type serine protease inhibitor C8 (23 aa).

Residues 7–23 (CYLPADPGECLAHMRSF) enclose the BPTI/Kunitz inhibitor domain.

It belongs to the venom Kunitz-type family. As to expression, expressed by the venom gland.

The protein resides in the secreted. Functionally, serine protease inhibitor that inhibits chymotrypsin. This chain is Kunitz-type serine protease inhibitor C8, found in Daboia siamensis (Eastern Russel's viper).